The primary structure comprises 377 residues: Flagellar P-ring protein (377 aa).

An N-terminal signal peptide occupies residues 1–30; it reads MLARFLSSLLKASVTALAVVVAFGFAANFA.

Belongs to the FlgI family. The basal body constitutes a major portion of the flagellar organelle and consists of four rings (L,P,S, and M) mounted on a central rod.

It is found in the periplasm. It localises to the bacterial flagellum basal body. Assembles around the rod to form the L-ring and probably protects the motor/basal body from shearing forces during rotation. This is Flagellar P-ring protein from Cupriavidus pinatubonensis (strain JMP 134 / LMG 1197) (Cupriavidus necator (strain JMP 134)).